Reading from the N-terminus, the 158-residue chain is Ribosome maturation factor RimP (158 aa).

The protein belongs to the RimP family.

The protein localises to the cytoplasm. Functionally, required for maturation of 30S ribosomal subunits. The sequence is that of Ribosome maturation factor RimP from Lactobacillus acidophilus (strain ATCC 700396 / NCK56 / N2 / NCFM).